The primary structure comprises 734 residues: Photosystem I P700 chlorophyll a apoprotein A2 (734 aa).

A run of 8 helical transmembrane segments spans residues 46–69 (IFAS…FHVA), 135–158 (LYAG…LHLQ), 175–199 (LNHH…HVAI), 273–291 (MAHH…GHMY), 330–353 (LHFQ…QHMY), 369–395 (AALY…IFLI), 417–439 (AIIS…LYVH), and 517–535 (FLVH…LILV). Cys-559 and Cys-568 together coordinate [4Fe-4S] cluster. The next 2 membrane-spanning stretches (helical) occupy residues 575–596 (AFYL…YWHW) and 643–665 (LSVW…MFLI). His-654, Met-662, and Tyr-670 together coordinate chlorophyll a. Trp-671 is a phylloquinone binding site. A helical transmembrane segment spans residues 707–727 (LVGLAHFSVGYIFTYAAFLIA).

It belongs to the PsaA/PsaB family. The PsaA/B heterodimer binds the P700 chlorophyll special pair and subsequent electron acceptors. PSI consists of a core antenna complex that captures photons, and an electron transfer chain that converts photonic excitation into a charge separation. The eukaryotic PSI reaction center is composed of at least 11 subunits. It depends on P700 is a chlorophyll a/chlorophyll a' dimer, A0 is one or more chlorophyll a, A1 is one or both phylloquinones and FX is a shared 4Fe-4S iron-sulfur center. as a cofactor.

Its subcellular location is the plastid. It is found in the chloroplast thylakoid membrane. It catalyses the reaction reduced [plastocyanin] + hnu + oxidized [2Fe-2S]-[ferredoxin] = oxidized [plastocyanin] + reduced [2Fe-2S]-[ferredoxin]. Functionally, psaA and PsaB bind P700, the primary electron donor of photosystem I (PSI), as well as the electron acceptors A0, A1 and FX. PSI is a plastocyanin-ferredoxin oxidoreductase, converting photonic excitation into a charge separation, which transfers an electron from the donor P700 chlorophyll pair to the spectroscopically characterized acceptors A0, A1, FX, FA and FB in turn. Oxidized P700 is reduced on the lumenal side of the thylakoid membrane by plastocyanin. This is Photosystem I P700 chlorophyll a apoprotein A2 from Pinus koraiensis (Korean pine).